The primary structure comprises 269 residues: Formamidopyrimidine-DNA glycosylase (269 aa).

Pro2 acts as the Schiff-base intermediate with DNA in catalysis. Glu3 functions as the Proton donor in the catalytic mechanism. Residue Lys57 is the Proton donor; for beta-elimination activity of the active site. Residues His90, Arg109, and Lys150 each contribute to the DNA site. The FPG-type zinc-finger motif lies at 235–269; the sequence is QVYGRKGEPCRVCGTPIVATKHAQRATFYCRHCQK. Arg259 functions as the Proton donor; for delta-elimination activity in the catalytic mechanism.

This sequence belongs to the FPG family. In terms of assembly, monomer. Requires Zn(2+) as cofactor.

The catalysed reaction is Hydrolysis of DNA containing ring-opened 7-methylguanine residues, releasing 2,6-diamino-4-hydroxy-5-(N-methyl)formamidopyrimidine.. It carries out the reaction 2'-deoxyribonucleotide-(2'-deoxyribose 5'-phosphate)-2'-deoxyribonucleotide-DNA = a 3'-end 2'-deoxyribonucleotide-(2,3-dehydro-2,3-deoxyribose 5'-phosphate)-DNA + a 5'-end 5'-phospho-2'-deoxyribonucleoside-DNA + H(+). Involved in base excision repair of DNA damaged by oxidation or by mutagenic agents. Acts as a DNA glycosylase that recognizes and removes damaged bases. Has a preference for oxidized purines, such as 7,8-dihydro-8-oxoguanine (8-oxoG). Has AP (apurinic/apyrimidinic) lyase activity and introduces nicks in the DNA strand. Cleaves the DNA backbone by beta-delta elimination to generate a single-strand break at the site of the removed base with both 3'- and 5'-phosphates. The protein is Formamidopyrimidine-DNA glycosylase of Salmonella dublin (strain CT_02021853).